Here is a 149-residue protein sequence, read N- to C-terminus: Large ribosomal subunit protein uL13 (149 aa).

It belongs to the universal ribosomal protein uL13 family. In terms of assembly, part of the 50S ribosomal subunit.

Its function is as follows. This protein is one of the early assembly proteins of the 50S ribosomal subunit, although it is not seen to bind rRNA by itself. It is important during the early stages of 50S assembly. The polypeptide is Large ribosomal subunit protein uL13 (Cyanothece sp. (strain PCC 7425 / ATCC 29141)).